Here is a 345-residue protein sequence, read N- to C-terminus: DNA primase small subunit PriS (345 aa).

Catalysis depends on residues Asp-95 and Asp-97. Zn(2+)-binding residues include Cys-106, His-108, Cys-114, and Cys-117. A Zinc knuckle motif motif is present at residues 106 to 117 (CNHEPGKVCPIC). Asp-280 is an active-site residue.

This sequence belongs to the eukaryotic-type primase small subunit family. In terms of assembly, heterodimer of a small subunit (PriS) and a large subunit (PriL). The cofactor is Mg(2+). It depends on Mn(2+) as a cofactor.

In terms of biological role, catalytic subunit of DNA primase, an RNA polymerase that catalyzes the synthesis of short RNA molecules used as primers for DNA polymerase during DNA replication. The small subunit contains the primase catalytic core and has DNA synthesis activity on its own, synthesizing DNA strands up to 3 kB. Binding to the large subunit stabilizes and modulates the activity, increasing the rate of DNA synthesis while decreasing the length of the DNA fragments, and conferring RNA synthesis capability for RNA fragments up to 150 bases. The DNA polymerase activity may enable DNA primase to also catalyze primer extension after primer synthesis. May also play a role in DNA repair. Displays gap-filling and strand-displacement activities. In Pyrococcus abyssi (strain GE5 / Orsay), this protein is DNA primase small subunit PriS.